The chain runs to 484 residues: Membrane-bound lytic murein transglycosylase F (484 aa).

The N-terminal stretch at 1-18 (MKGLLLRIIAAFALVLWA) is a signal peptide. The segment at 19-267 (IDMVFPWQQM…RIEEKYFNHF (249 aa)) is non-LT domain. The interval 268 to 484 (SQFDYVDMRQ…PLTDNQEKQE (217 aa)) is LT domain. Glutamate 312 is a catalytic residue. Positions 459-484 (ADNKDKPSETDENLPLPLTDNQEKQE) are disordered.

The protein in the N-terminal section; belongs to the bacterial solute-binding protein 3 family. In the C-terminal section; belongs to the transglycosylase Slt family.

The protein localises to the cell outer membrane. The catalysed reaction is Exolytic cleavage of the (1-&gt;4)-beta-glycosidic linkage between N-acetylmuramic acid (MurNAc) and N-acetylglucosamine (GlcNAc) residues in peptidoglycan, from either the reducing or the non-reducing ends of the peptidoglycan chains, with concomitant formation of a 1,6-anhydrobond in the MurNAc residue.. Functionally, murein-degrading enzyme that degrades murein glycan strands and insoluble, high-molecular weight murein sacculi, with the concomitant formation of a 1,6-anhydromuramoyl product. Lytic transglycosylases (LTs) play an integral role in the metabolism of the peptidoglycan (PG) sacculus. Their lytic action creates space within the PG sacculus to allow for its expansion as well as for the insertion of various structures such as secretion systems and flagella. The chain is Membrane-bound lytic murein transglycosylase F from Mannheimia succiniciproducens (strain KCTC 0769BP / MBEL55E).